Here is a 433-residue protein sequence, read N- to C-terminus: GTPase Der (433 aa).

2 consecutive EngA-type G domains span residues 5–167 (KKVL…GEVG) and 174–349 (IKVG…DQLE). GTP is bound by residues 11-18 (GRPNVGKS), 58-62 (DTGGF), 119-122 (NKVD), 180-187 (GKPNSGKS), 227-231 (DTAGI), and 292-295 (SKWD). In terms of domain architecture, KH-like spans 349 to 429 (ELKTSTPDLN…PILVELKEKI (81 aa)).

The protein belongs to the TRAFAC class TrmE-Era-EngA-EngB-Septin-like GTPase superfamily. EngA (Der) GTPase family. Associates with the 50S ribosomal subunit.

GTPase that plays an essential role in the late steps of ribosome biogenesis. The protein is GTPase Der of Borreliella burgdorferi (strain ATCC 35210 / DSM 4680 / CIP 102532 / B31) (Borrelia burgdorferi).